A 357-amino-acid polypeptide reads, in one-letter code: S-adenosyl-L-methionine:benzoic acid/salicylic acid carboxyl methyltransferase 2 (357 aa).

An S-adenosyl-L-homocysteine-binding site is contributed by tyrosine 18. Residue glutamine 25 coordinates benzoate. The S-adenosyl-L-homocysteine site is built by cysteine 59, asparagine 64, aspartate 96, leucine 97, serine 135, and phenylalanine 136. Residue tryptophan 157 coordinates benzoate. Mg(2+) is bound by residues asparagine 168, aspartate 254, phenylalanine 256, and asparagine 257. Benzoate is bound at residue glutamine 260.

The protein belongs to the methyltransferase superfamily. Type-7 methyltransferase family. Predominantly expressed in petal limbs and tubes of corollas.

It carries out the reaction benzoate + S-adenosyl-L-methionine = methyl benzoate + S-adenosyl-L-homocysteine. The enzyme catalyses salicylate + S-adenosyl-L-methionine = methyl salicylate + S-adenosyl-L-homocysteine. The protein operates within aromatic compound metabolism. Functionally, converts benzoic acid into the volatile ester methyl benzoates. This scent, mostly produced in a rhythmical, diurnal manner, attracts the pollinators. This chain is S-adenosyl-L-methionine:benzoic acid/salicylic acid carboxyl methyltransferase 2, found in Petunia hybrida (Petunia).